Here is a 504-residue protein sequence, read N- to C-terminus: MKNEKRKTGIEPKVFFPPLIIVGILCWLTVRDLDAANVVINAVFSYVTNVWGWAFEWYMVVMLFGWFWLVFGPYAKKRLGNEPPEFSTASWIFMMFASCTSAAVLFWGSIEIYYYISTPPFGLEPNSTGAKELGLAYSLFHWGPLPWATYSFLSVAFAYFFFVRKMEVIRPSSTLVPLVGEKHAKGLFGTIVDNFYLVALIFAMGTSLGLATPLVTECMQWLFGIPHTLQLDAIIITCWIILNAICVACGLQKGVRIASDVRSYLSFLMLGWVFIVSGASFIMNYFTDSVGMLLMYLPRMLFYTDPIAKGGFPQGWTVFYWAWWVIYAIQMSIFLARISRGRTVRELCFGMVLGLTASTWILWTVLGSNTLLLIDKNIINIPNLIEQYGVARAIIETWAALPLSTATMWGFFILCFIATVTLVNACSYTLAMSTCREVRDGEEPPLLVRIGWSILVGIIGIVLLALGGLKPIQTAIIAGGCPLFFVNIMVTLSFIKDAKQNWKD.

Transmembrane regions (helical) follow at residues 10–30 (IEPK…WLTV), 51–71 (WGWA…WLVF), 92–112 (IFMM…SIEI), 143–163 (GPLP…FFFV), 195–215 (FYLV…TPLV), 231–251 (LDAI…ACGL), 263–283 (SYLS…SFIM), 316–336 (WTVF…IFLA), 347–367 (LCFG…TVLG), 398–418 (WAAL…CFIA), 446–466 (LLVR…LLAL), and 475–495 (AIIA…LSFI).

Belongs to the BCCT transporter (TC 2.A.15) family. CaiT subfamily. In terms of assembly, homotrimer.

Its subcellular location is the cell inner membrane. The catalysed reaction is 4-(trimethylamino)butanoate(in) + (R)-carnitine(out) = 4-(trimethylamino)butanoate(out) + (R)-carnitine(in). It functions in the pathway amine and polyamine metabolism; carnitine metabolism. Catalyzes the exchange of L-carnitine for gamma-butyrobetaine. This is L-carnitine/gamma-butyrobetaine antiporter from Escherichia coli (strain K12 / MC4100 / BW2952).